The following is a 566-amino-acid chain: Class II hydrophobin FOXG_02748 (566 aa).

An N-terminal signal peptide occupies residues 1–22 (MKSKSIMAASTVMELALAQASA). 4 disulfide bridges follow: C497-C546, C507-C537, C508-C520, and C547-C558.

It belongs to the cerato-ulmin hydrophobin family. In terms of assembly, homodimer. Homodimers further self-assemble to form highly ordered films at water-air interfaces through intermolecular interactions.

Its subcellular location is the secreted. The protein localises to the cell wall. Aerial growth, conidiation, and dispersal of filamentous fungi in the environment rely upon a capability of their secreting small amphipathic proteins called hydrophobins (HPBs) with low sequence identity. Class I can self-assemble into an outermost layer of rodlet bundles on aerial cell surfaces, conferring cellular hydrophobicity that supports fungal growth, development and dispersal; whereas Class II form highly ordered films at water-air interfaces through intermolecular interactions but contribute nothing to the rodlet structure. FOXG_02748 is a class II hydrophobin that is likely required for plant colonization. This chain is Class II hydrophobin FOXG_02748, found in Fusarium oxysporum f. sp. lycopersici (strain 4287 / CBS 123668 / FGSC 9935 / NRRL 34936) (Fusarium vascular wilt of tomato).